Reading from the N-terminus, the 432-residue chain is Adenylosuccinate synthetase (432 aa).

Residues 13–19 (GDEGKGK) and 41–43 (GHT) contribute to the GTP site. D14 acts as the Proton acceptor in catalysis. Mg(2+) contacts are provided by D14 and G41. IMP contacts are provided by residues 14 to 17 (DEGK), 39 to 42 (NAGH), T130, R144, Q225, T240, and R304. H42 acts as the Proton donor in catalysis. 300–306 (ATTGRKR) is a substrate binding site. Residues R306, 332 to 334 (KLD), and 414 to 416 (STG) contribute to the GTP site.

Belongs to the adenylosuccinate synthetase family. As to quaternary structure, homodimer. It depends on Mg(2+) as a cofactor.

Its subcellular location is the cytoplasm. The catalysed reaction is IMP + L-aspartate + GTP = N(6)-(1,2-dicarboxyethyl)-AMP + GDP + phosphate + 2 H(+). The protein operates within purine metabolism; AMP biosynthesis via de novo pathway; AMP from IMP: step 1/2. Plays an important role in the de novo pathway of purine nucleotide biosynthesis. Catalyzes the first committed step in the biosynthesis of AMP from IMP. This chain is Adenylosuccinate synthetase, found in Alkalilimnicola ehrlichii (strain ATCC BAA-1101 / DSM 17681 / MLHE-1).